The sequence spans 247 residues: 3-deoxy-manno-octulosonate cytidylyltransferase (247 aa).

Belongs to the KdsB family.

The protein resides in the cytoplasm. The catalysed reaction is 3-deoxy-alpha-D-manno-oct-2-ulosonate + CTP = CMP-3-deoxy-beta-D-manno-octulosonate + diphosphate. Its pathway is nucleotide-sugar biosynthesis; CMP-3-deoxy-D-manno-octulosonate biosynthesis; CMP-3-deoxy-D-manno-octulosonate from 3-deoxy-D-manno-octulosonate and CTP: step 1/1. It participates in bacterial outer membrane biogenesis; lipopolysaccharide biosynthesis. Functionally, activates KDO (a required 8-carbon sugar) for incorporation into bacterial lipopolysaccharide in Gram-negative bacteria. This Chlorobium limicola (strain DSM 245 / NBRC 103803 / 6330) protein is 3-deoxy-manno-octulosonate cytidylyltransferase.